The sequence spans 603 residues: uncharacterized protein (603 aa).

A PE domain is found at 1–93 (MSFVIAAPET…AGAYASAEAA (93 aa)). The segment at 309–333 (GIFTGNGGTGGTGGTGTGNQLVGGE) is disordered.

Belongs to the mycobacterial PE family. PGRS subfamily.

This is an uncharacterized protein from Mycobacterium tuberculosis (strain CDC 1551 / Oshkosh).